The following is a 297-amino-acid chain: Lipoprotein NlpD/LppB homolog (297 aa).

The first 22 residues, 1-22 (MDKGEGLRLAATLRQWTRLYGG), serve as a signal peptide directing secretion. A lipid anchor (N-palmitoyl cysteine) is attached at Cys23. Cys23 carries the S-diacylglycerol cysteine lipid modification. In terms of domain architecture, LysM spans 67-111 (GQYIVRRGDTLYSIAFRFGWDWKALAARNGIAPPYTIQVGQAIQF). The tract at residues 134-168 (TKPTPVPPAVSTSVPAKPAPAPASTTTPPSSGATP) is disordered.

Belongs to the E.coli NlpD/Haemophilus LppB family.

Its subcellular location is the cell inner membrane. The protein is Lipoprotein NlpD/LppB homolog of Pseudomonas aeruginosa (strain ATCC 15692 / DSM 22644 / CIP 104116 / JCM 14847 / LMG 12228 / 1C / PRS 101 / PAO1).